Here is a 343-residue protein sequence, read N- to C-terminus: Fructose-1,6-bisphosphatase class 1 (343 aa).

Positions 90, 109, 111, and 112 each coordinate Mg(2+). Residues 112-115 and Asn199 each bind substrate; that span reads DGSS. Residue Glu271 participates in Mg(2+) binding.

The protein belongs to the FBPase class 1 family. As to quaternary structure, homotetramer. Requires Mg(2+) as cofactor.

It localises to the cytoplasm. It carries out the reaction beta-D-fructose 1,6-bisphosphate + H2O = beta-D-fructose 6-phosphate + phosphate. Its pathway is carbohydrate biosynthesis; Calvin cycle. The sequence is that of Fructose-1,6-bisphosphatase class 1 from Rhodopseudomonas palustris (strain HaA2).